An 85-amino-acid polypeptide reads, in one-letter code: Translation initiation factor IF-1 1 (85 aa).

Positions 1–72 (MAKEELIEMS…SKGRITFRHL (72 aa)) constitute an S1-like domain.

This sequence belongs to the IF-1 family. Component of the 30S ribosomal translation pre-initiation complex which assembles on the 30S ribosome in the order IF-2 and IF-3, IF-1 and N-formylmethionyl-tRNA(fMet); mRNA recruitment can occur at any time during PIC assembly.

The protein localises to the cytoplasm. Functionally, one of the essential components for the initiation of protein synthesis. Stabilizes the binding of IF-2 and IF-3 on the 30S subunit to which N-formylmethionyl-tRNA(fMet) subsequently binds. Helps modulate mRNA selection, yielding the 30S pre-initiation complex (PIC). Upon addition of the 50S ribosomal subunit IF-1, IF-2 and IF-3 are released leaving the mature 70S translation initiation complex. The sequence is that of Translation initiation factor IF-1 1 from Aromatoleum aromaticum (strain DSM 19018 / LMG 30748 / EbN1) (Azoarcus sp. (strain EbN1)).